The following is a 240-amino-acid chain: 4-hydroxy-tetrahydrodipicolinate reductase (240 aa).

NAD(+) is bound by residues 8-13 (GSTGKM), 78-80 (GTT), and 102-105 (SANM). The Proton donor/acceptor role is filled by His-134. His-135 contributes to the (S)-2,3,4,5-tetrahydrodipicolinate binding site. Lys-138 acts as the Proton donor in catalysis. 144–145 (GT) is a (S)-2,3,4,5-tetrahydrodipicolinate binding site.

Belongs to the DapB family.

It localises to the cytoplasm. It carries out the reaction (S)-2,3,4,5-tetrahydrodipicolinate + NAD(+) + H2O = (2S,4S)-4-hydroxy-2,3,4,5-tetrahydrodipicolinate + NADH + H(+). It catalyses the reaction (S)-2,3,4,5-tetrahydrodipicolinate + NADP(+) + H2O = (2S,4S)-4-hydroxy-2,3,4,5-tetrahydrodipicolinate + NADPH + H(+). The protein operates within amino-acid biosynthesis; L-lysine biosynthesis via DAP pathway; (S)-tetrahydrodipicolinate from L-aspartate: step 4/4. Catalyzes the conversion of 4-hydroxy-tetrahydrodipicolinate (HTPA) to tetrahydrodipicolinate. The protein is 4-hydroxy-tetrahydrodipicolinate reductase of Rickettsia canadensis (strain McKiel).